Consider the following 508-residue polypeptide: MDNYPKLEEMMLLSNGAPQFLGAAGTPEGSGGNNSSSSSSSSSGGGGGGGSNSGSSAFNPQGEPSEQPYEHLTTESFSDIALNNEKALVETSYPSQTTRLPPITYTGRFSLEPAPNSGNTLWPEPLFSLVSGLVSMTNPPTSSSSAPSPAASSSSSASQSPPLSCAVPSNDSSPIYSAAPTFPTPNTDIFPEPQSQAFPGSAGTALQYPPPAYPATKGGFQVPMIPDYLFPQQQGDLSLGTPDQKPFQGLENRTQQPSLTPLSTIKAFATQSGSQDLKALNNTYQSQLIKPSRMRKYPNRPSKTPPHERPYACPVESCDRRFSRSDELTRHIRIHTGQKPFQCRICMRNFSRSDHLTTHIRTHTGEKPFACDICGRKFARSDERKRHTKIHLRQKDKKADKSVVASSAASSLSSYPSPVATSYPSPATTSFPSPVPTSYSSPGSSTYPSPAHSGFPSPSVATTYASVPPAFPAQVSTFQSAGVSNSFSTSTGLSDMTATFSPRTIEIC.

Disordered stretches follow at residues 18 to 78 (PQFL…ESFS) and 136 to 210 (MTNP…QYPP). The span at 33-42 (NNSSSSSSSS) shows a compositional bias: low complexity. The segment covering 43 to 52 (SGGGGGGGSN) has biased composition (gly residues). Residues 139-164 (PPTSSSSAPSPAASSSSSASQSPPLS) are compositionally biased toward low complexity. A Glycyl lysine isopeptide (Lys-Gly) (interchain with G-Cter in SUMO2) cross-link involves residue lysine 278. The tract at residues 292-311 (SRMRKYPNRPSKTPPHERPY) is disordered. 3 consecutive C2H2-type zinc fingers follow at residues 311 to 335 (YACP…IRIH), 341 to 363 (FQCR…IRTH), and 369 to 391 (FACD…TKIH). A disordered region spans residues 382-453 (DERKRHTKIH…SSTYPSPAHS (72 aa)). A compositionally biased stretch (basic residues) spans 386–396 (RHTKIHLRQKD). Residues 402–450 (SVVASSAASSLSSYPSPVATSYPSPATTSFPSPVPTSYSSPGSSTYPSP) are compositionally biased toward low complexity. 7 consecutive repeat copies span residues 413 to 420 (SSYPSPVA), 421 to 428 (TSYPSPAT), 429 to 436 (TSFPSPVP), 437 to 444 (TSYSSPGS), 445 to 452 (STYPSPAH), 453 to 460 (SGFPSPSV), and 462 to 468 (TTYASVP). The 7 X 8 AA tandem repeats of [TS](2)-[FY]-[PS]-S-P-[GSAV]-X stretch occupies residues 413 to 468 (SSYPSPVATSYPSPATTSFPSPVPTSYSSPGSSTYPSPAHSGFPSPSVATTYASVP).

Belongs to the EGR C2H2-type zinc-finger protein family. As to quaternary structure, interacts with SNAI1 and SP1 upon 12-O-tetradecanoylphorbol-13-acetate (TPA) induction. Detected in kidney thick ascending limbs and collecting ducts (at protein level).

Its subcellular location is the nucleus. It is found in the cytoplasm. Functionally, transcriptional regulator. Recognizes and binds to the DNA sequence 5'-GCG(T/G)GGGCG-3'(EGR-site) in the promoter region of target genes. Binds double-stranded target DNA, irrespective of the cytosine methylation status. Regulates the transcription of numerous target genes, and thereby plays an important role in regulating the response to growth factors, DNA damage, and ischemia. Plays a role in the regulation of cell survival, proliferation and cell death. Activates expression of p53/TP53 and TGFB1, and thereby helps prevent tumor formation. Required for normal progress through mitosis and normal proliferation of hepatocytes after partial hepatectomy. Mediates responses to ischemia and hypoxia; regulates the expression of proteins such as IL1B and CXCL2 that are involved in inflammatory processes and development of tissue damage after ischemia. Regulates biosynthesis of luteinizing hormone (LHB) in the pituitary. Regulates the amplitude of the expression rhythms of clock genes: BMAL1, PER2 and NR1D1 in the liver via the activation of PER1 (clock repressor) transcription. Regulates the rhythmic expression of core-clock gene BMAL1 in the suprachiasmatic nucleus (SCN). Regulates biosynthesis of glucocorticoid receptor GR/NR3C1 in the hippocampus and thereby may play a role in the behavioral and hypothalamic-pituitary-adrenal responses to stress in offspring. This Rattus norvegicus (Rat) protein is Early growth response protein 1 (Egr1).